A 327-amino-acid polypeptide reads, in one-letter code: Poly(ribitol-phosphate) beta-N-acetylglucosaminyltransferase TarP (327 aa).

UDP-N-acetyl-alpha-D-glucosamine is bound by residues Pro9, Asp41, Asn68, Arg76, and 92–94 (DSD). A Mn(2+)-binding site is contributed by Asp94. Asp181 (proton acceptor) is an active-site residue.

The protein belongs to the glycosyltransferase 2 family. In terms of assembly, homotrimer. Mn(2+) is required as a cofactor.

It carries out the reaction 4-O-[(D-ribitylphospho)(n)-di{(2R)-glycerylphospho}]-N-acetyl-beta-D-mannosaminyl-(1-&gt;4)-N-acetyl-alpha-D-glucosaminyl di-trans,octa-cis-undecaprenyl diphosphate + n UDP-N-acetyl-alpha-D-glucosamine = 4-O-([3-N-acetyl-beta-D-glucosaminyl-1-D-ribitylphospho](n)-di{[2R]-1-glycerylphospho})-N-acetyl-beta-D-mannosaminyl-(1-&gt;4)-N-acetyl-alpha-D-glucosaminyl di-trans,octa-cis-undecaprenyl diphosphate + n UDP + n H(+). It functions in the pathway cell wall biogenesis; poly(ribitol phosphate) teichoic acid biosynthesis. In terms of biological role, attaches beta-O-GlcNAc (beta-O-N-acetyl-D-glucosamine) residues to the C3 position of poly(RboP)-wall teichoic acids (WTAs). Attenuates immunogenicity of WTA and protects S.aureus against adaptative host defenses by allowing bacteria to evade recognition by preexisting anti-S.aureus antibodies. Also protects the cell from podophage infection. This Staphylococcus aureus (strain N315) protein is Poly(ribitol-phosphate) beta-N-acetylglucosaminyltransferase TarP.